The sequence spans 544 residues: WD repeat-containing protein 25 (544 aa).

2 disordered regions span residues D17–G74 and Q183–P208. Residues F30 to T39 show a composition bias toward polar residues. 7 WD repeats span residues G244–Q286, L290–S329, G330–K373, T375–N420, H424–R463, G469–T510, and G513–H544.

In terms of tissue distribution, expressed in heart, muscle, testis, ovary, uterus and prostate.

The protein is WD repeat-containing protein 25 of Homo sapiens (Human).